Here is a 548-residue protein sequence, read N- to C-terminus: Glutamate--tRNA ligase (548 aa).

The short motif at 102-112 (PSPSGPLHIGH) is the 'HIGH' region element.

This sequence belongs to the class-I aminoacyl-tRNA synthetase family. Glutamate--tRNA ligase type 2 subfamily.

It is found in the cytoplasm. The catalysed reaction is tRNA(Glu) + L-glutamate + ATP = L-glutamyl-tRNA(Glu) + AMP + diphosphate. Its function is as follows. Catalyzes the attachment of glutamate to tRNA(Glu) in a two-step reaction: glutamate is first activated by ATP to form Glu-AMP and then transferred to the acceptor end of tRNA(Glu). The chain is Glutamate--tRNA ligase from Thermoplasma acidophilum (strain ATCC 25905 / DSM 1728 / JCM 9062 / NBRC 15155 / AMRC-C165).